A 690-amino-acid polypeptide reads, in one-letter code: Polyribonucleotide nucleotidyltransferase (690 aa).

Asp482 and Asp488 together coordinate Mg(2+). A KH domain is found at 549–608; it reads PRIITIQINPDRIRDVIGPGGKVIRALTEETGATIDIQDNGTVTIASVDGEAGAAAKRRI. Residues 618–686 form the S1 motif domain; it reads DTIYDGKVAK…RQGKIKLSMK (69 aa).

The protein belongs to the polyribonucleotide nucleotidyltransferase family. Component of the RNA degradosome, which is a multiprotein complex involved in RNA processing and mRNA degradation. Mg(2+) is required as a cofactor.

It localises to the cytoplasm. It catalyses the reaction RNA(n+1) + phosphate = RNA(n) + a ribonucleoside 5'-diphosphate. Its function is as follows. Involved in mRNA degradation. Catalyzes the phosphorolysis of single-stranded polyribonucleotides processively in the 3'- to 5'-direction. This is Polyribonucleotide nucleotidyltransferase from Acidithiobacillus ferrooxidans (strain ATCC 23270 / DSM 14882 / CIP 104768 / NCIMB 8455) (Ferrobacillus ferrooxidans (strain ATCC 23270)).